A 556-amino-acid chain; its full sequence is Formate--tetrahydrofolate ligase 1 (556 aa).

Residue 65-72 coordinates ATP; sequence TPAGEGKS.

The protein belongs to the formate--tetrahydrofolate ligase family.

The enzyme catalyses (6S)-5,6,7,8-tetrahydrofolate + formate + ATP = (6R)-10-formyltetrahydrofolate + ADP + phosphate. Its pathway is one-carbon metabolism; tetrahydrofolate interconversion. The chain is Formate--tetrahydrofolate ligase 1 from Streptococcus pyogenes serotype M1.